A 67-amino-acid polypeptide reads, in one-letter code: Phycobilisome 7.8 kDa linker polypeptide, allophycocyanin-associated, core (67 aa).

One can recognise a CpcD-like domain in the interval 1-56 (MRMFKITACVPSQTRIRTQRELQNTYFTKLVPYENWFREQQRIQKMGGKIVKVELF).

The protein belongs to the phycobilisome linker protein family.

Its subcellular location is the cellular thylakoid membrane. Functionally, rod linker protein, associated with allophycocyanin. Linker polypeptides determine the state of aggregation and the location of the disk-shaped phycobiliprotein units within the phycobilisome and modulate their spectroscopic properties in order to mediate a directed and optimal energy transfer. The polypeptide is Phycobilisome 7.8 kDa linker polypeptide, allophycocyanin-associated, core (apcC) (Thermosynechococcus vestitus (strain NIES-2133 / IAM M-273 / BP-1)).